Reading from the N-terminus, the 77-residue chain is UPF0270 protein Spro_4577 (77 aa).

The protein belongs to the UPF0270 family.

This Serratia proteamaculans (strain 568) protein is UPF0270 protein Spro_4577.